The chain runs to 336 residues: Large ribosomal subunit protein uL1 (336 aa).

A large ribosomal subunit protein uL1 region spans residues 1–245; the sequence is MANQKKVTNK…VKKTAKGKVI (245 aa). The unknown stretch occupies residues 246–336; that stretch reads ADDSAKGENK…DVKKAKTSKK (91 aa). Residues 267–336 form a disordered region; the sequence is AQKKKPSKHP…DVKKAKTSKK (70 aa). Over residues 286–305 the composition is skewed to basic residues; the sequence is KKKKVKKILKKAKPAKKAAV. Over residues 306-315 the composition is skewed to low complexity; it reads AKKPVVVNKK.

Belongs to the universal ribosomal protein uL1 family. In terms of assembly, part of the 50S ribosomal subunit.

In terms of biological role, binds directly to 23S rRNA. The L1 stalk is quite mobile in the ribosome, and is involved in E site tRNA release. Functionally, protein L1 is also a translational repressor protein, it controls the translation of the L11 operon by binding to its mRNA. This Malacoplasma penetrans (strain HF-2) (Mycoplasma penetrans) protein is Large ribosomal subunit protein uL1.